The chain runs to 254 residues: N-acetylglucosaminyldiphosphoundecaprenol N-acetyl-beta-D-mannosaminyltransferase (254 aa).

The protein belongs to the glycosyltransferase 26 family. TagA/TarA subfamily.

It catalyses the reaction UDP-N-acetyl-alpha-D-mannosamine + N-acetyl-alpha-D-glucosaminyl-di-trans,octa-cis-undecaprenyl diphosphate = N-acetyl-beta-D-mannosaminyl-(1-&gt;4)-N-acetyl-alpha-D-glucosaminyl di-trans,octa-cis-undecaprenyl diphosphate + UDP + H(+). The protein operates within cell wall biogenesis; poly(ribitol phosphate) teichoic acid biosynthesis. In terms of biological role, catalyzes the conversion of GlcNAc-PP-undecaprenol into ManNAc-GlcNAc-PP-undecaprenol, the first committed lipid intermediate in the de novo synthesis of teichoic acid. This is N-acetylglucosaminyldiphosphoundecaprenol N-acetyl-beta-D-mannosaminyltransferase from Staphylococcus aureus (strain NCTC 8325 / PS 47).